Consider the following 376-residue polypeptide: UDP-N-acetylglucosamine--N-acetylmuramyl-(pentapeptide) pyrophosphoryl-undecaprenol N-acetylglucosamine transferase (376 aa).

UDP-N-acetyl-alpha-D-glucosamine is bound by residues 11–13 (TGG), N117, R160, S208, and Q310.

Belongs to the glycosyltransferase 28 family. MurG subfamily.

The protein localises to the cell inner membrane. It carries out the reaction di-trans,octa-cis-undecaprenyl diphospho-N-acetyl-alpha-D-muramoyl-L-alanyl-D-glutamyl-meso-2,6-diaminopimeloyl-D-alanyl-D-alanine + UDP-N-acetyl-alpha-D-glucosamine = di-trans,octa-cis-undecaprenyl diphospho-[N-acetyl-alpha-D-glucosaminyl-(1-&gt;4)]-N-acetyl-alpha-D-muramoyl-L-alanyl-D-glutamyl-meso-2,6-diaminopimeloyl-D-alanyl-D-alanine + UDP + H(+). The protein operates within cell wall biogenesis; peptidoglycan biosynthesis. Its function is as follows. Cell wall formation. Catalyzes the transfer of a GlcNAc subunit on undecaprenyl-pyrophosphoryl-MurNAc-pentapeptide (lipid intermediate I) to form undecaprenyl-pyrophosphoryl-MurNAc-(pentapeptide)GlcNAc (lipid intermediate II). The chain is UDP-N-acetylglucosamine--N-acetylmuramyl-(pentapeptide) pyrophosphoryl-undecaprenol N-acetylglucosamine transferase from Rickettsia conorii (strain ATCC VR-613 / Malish 7).